Here is a 286-residue protein sequence, read N- to C-terminus: Thymidylate synthase (286 aa).

Residue 140-141 (RR) participates in dUMP binding. The active-site Nucleophile is the C161. DUMP is bound by residues 185–188 (RSND), N196, and 226–228 (HIY). D188 contributes to the (6R)-5,10-methylene-5,6,7,8-tetrahydrofolate binding site. Position 285 (A285) interacts with (6R)-5,10-methylene-5,6,7,8-tetrahydrofolate.

The protein belongs to the thymidylate synthase family. Bacterial-type ThyA subfamily. In terms of assembly, homodimer.

The protein localises to the cytoplasm. The enzyme catalyses dUMP + (6R)-5,10-methylene-5,6,7,8-tetrahydrofolate = 7,8-dihydrofolate + dTMP. Its pathway is pyrimidine metabolism; dTTP biosynthesis. Functionally, catalyzes the reductive methylation of 2'-deoxyuridine-5'-monophosphate (dUMP) to 2'-deoxythymidine-5'-monophosphate (dTMP) while utilizing 5,10-methylenetetrahydrofolate (mTHF) as the methyl donor and reductant in the reaction, yielding dihydrofolate (DHF) as a by-product. This enzymatic reaction provides an intracellular de novo source of dTMP, an essential precursor for DNA biosynthesis. This chain is Thymidylate synthase, found in Streptococcus thermophilus (strain ATCC BAA-491 / LMD-9).